The chain runs to 283 residues: D-alanine aminotransferase (283 aa).

Tyr-32 is a substrate binding site. Arg-51 contributes to the pyridoxal 5'-phosphate binding site. Residues Arg-99 and His-101 each coordinate substrate. Lys-146 acts as the Proton acceptor in catalysis. The residue at position 146 (Lys-146) is an N6-(pyridoxal phosphate)lysine. Glu-178 contacts pyridoxal 5'-phosphate.

Belongs to the class-IV pyridoxal-phosphate-dependent aminotransferase family. Homodimer. It depends on pyridoxal 5'-phosphate as a cofactor.

The catalysed reaction is D-alanine + 2-oxoglutarate = D-glutamate + pyruvate. Its function is as follows. Acts on the D-isomers of alanine, leucine, aspartate, glutamate, aminobutyrate, norvaline and asparagine. The enzyme transfers an amino group from a substrate D-amino acid to the pyridoxal phosphate cofactor to form pyridoxamine and an alpha-keto acid in the first half-reaction. The second-half reaction is the reverse of the first, transferring the amino group from the pyridoxamine to a second alpha-keto acid to form the product D-amino acid via a ping-pong mechanism. This is an important process in the formation of D-alanine and D-glutamate, which are essential bacterial cell wall components. The protein is D-alanine aminotransferase (dat) of Bacillus sp. (strain YM-1).